A 485-amino-acid chain; its full sequence is Glutamate--tRNA ligase 2 (485 aa).

The short motif at 10–20 (PSPTGPIHIGN) is the 'HIGH' region element. The short motif at 252-256 (KLSKR) is the 'KMSKS' region element. An ATP-binding site is contributed by Lys255.

It belongs to the class-I aminoacyl-tRNA synthetase family. Glutamate--tRNA ligase type 1 subfamily. As to quaternary structure, monomer.

Its subcellular location is the cytoplasm. The enzyme catalyses tRNA(Glu) + L-glutamate + ATP = L-glutamyl-tRNA(Glu) + AMP + diphosphate. In terms of biological role, catalyzes the attachment of glutamate to tRNA(Glu) in a two-step reaction: glutamate is first activated by ATP to form Glu-AMP and then transferred to the acceptor end of tRNA(Glu). This is Glutamate--tRNA ligase 2 from Caldanaerobacter subterraneus subsp. tengcongensis (strain DSM 15242 / JCM 11007 / NBRC 100824 / MB4) (Thermoanaerobacter tengcongensis).